A 379-amino-acid polypeptide reads, in one-letter code: Homoserine O-succinyltransferase (379 aa).

One can recognise an AB hydrolase-1 domain in the interval 51–360 (NAVLICHALS…DSPYGHDAFL (310 aa)). S157 acts as the Nucleophile in catalysis. R227 contributes to the substrate binding site. Active-site residues include D323 and H356. D357 contacts substrate.

It belongs to the AB hydrolase superfamily. MetX family. In terms of assembly, homodimer.

The protein resides in the cytoplasm. The catalysed reaction is L-homoserine + succinyl-CoA = O-succinyl-L-homoserine + CoA. Its pathway is amino-acid biosynthesis; L-methionine biosynthesis via de novo pathway; O-succinyl-L-homoserine from L-homoserine: step 1/1. Its function is as follows. Transfers a succinyl group from succinyl-CoA to L-homoserine, forming succinyl-L-homoserine. The sequence is that of Homoserine O-succinyltransferase from Pseudomonas entomophila (strain L48).